The sequence spans 215 residues: MNLVGSYAHHHHHHHPHPAHPMLHEPFLFGPASRCHQERPYFQSWLLSPADAAPDFPTGGPPPTAAAAAATYGPDTRPGQSPGRLEALGGRLGRRKGSGPKKERRRTESINSAFAELRECIPNVPADTKLSKIKTLRLATSYIAYLMDVLAKDAQAGDPEAFKAELKKVDGGRESKRKRELQQHEGFPPALGPGEKRIKGRTGWPQQVWALELNQ.

2 disordered regions span residues 53-109 and 169-202; these read APDF…RTES and VDGGRESKRKRELQQHEGFPPALGPGEKRIKGRT. The span at 65-75 shows a compositional bias: low complexity; that stretch reads AAAAAATYGPD. Basic residues predominate over residues 92 to 104; it reads LGRRKGSGPKKER. The 53-residue stretch at 94 to 146 folds into the bHLH domain; sequence RRKGSGPKKERRRTESINSAFAELRECIPNVPADTKLSKIKTLRLATSYIAYL. T107 carries the post-translational modification Phosphothreonine; by PLK4. S109 carries the phosphoserine; by PLK4 modification.

Efficient DNA binding requires dimerization with another bHLH protein. Forms homodimers and heterodimers with TCF3 gene products E12 and E47, HAND2 and HEY1, HEY2 and HEYL (hairy-related transcription factors). Interacts with MDFIC. Interacts with SOX15; the interaction enhances HAND1-induced differentiation of trophoblast giant cells. Post-translationally, phosphorylation by PLK4 disrupts the interaction with MDFIC and leads to translocation into the nucleoplasm, allowing dimerization and transcription factor activity.

Its subcellular location is the nucleus. The protein localises to the nucleoplasm. The protein resides in the nucleolus. Its function is as follows. Transcription factor that plays an essential role in both trophoblast giant cell differentiation and in cardiac morphogenesis. Binds the DNA sequence 5'-NRTCTG-3' (non-canonical E-box). Acts as a transcriptional repressor of SOX15. In the adult, could be required for ongoing expression of cardiac-specific genes. This chain is Heart- and neural crest derivatives-expressed protein 1 (HAND1), found in Oryctolagus cuniculus (Rabbit).